A 500-amino-acid polypeptide reads, in one-letter code: MTLGYNEKLVLLTIAKLEKASVEEIVKETRLDQVAVMRAILTLEKEGLIKLHERKEKIIVLTDIGKEYSKIGLPEIRALRVLREKKKAYLDELKDVLREDELKAIVGILRREGLANVRKDEKGLVLEITEKGEKLGERPIDIALKLLSEKGEVSVDEISRIIDVKDLKRRKIAREDERVERTVEITEKGKKLVSKGIELKREVTRLTPELIASGKWREVELKPFNIKAPVKRIYPGKKQPYRVFLDKIRRRLIEMGFIEMTVDSLIETQFWNFDALFQPQNHPAREWTDTYQLKYPEKGYLPDESLVSRVKEAHERGLAGSRGWGYVWSPERAMLLMPRAHATALSARQLAKGIEIPGKYFTIQRVFRPDVLDRTHLIEFNQIDGFVAGEDLTFRHLLGILKRFAIEIAGAKKVKFFPDYYPFTEPSVQLSAYHPELGWVEFGGAGVFREEMTEALGIKVPVIAWGIGIDRLAMFKLGIDDIRYLFSYDLRWLREAKLIW.

L-phenylalanine-binding positions include Thr343, Gln382–Asp384, and Phe423. Residue Glu425 coordinates Mg(2+). Phe448 provides a ligand contact to L-phenylalanine.

It belongs to the class-II aminoacyl-tRNA synthetase family. Phe-tRNA synthetase alpha subunit type 2 subfamily. Tetramer of two alpha and two beta subunits. Mg(2+) serves as cofactor.

The protein localises to the cytoplasm. The catalysed reaction is tRNA(Phe) + L-phenylalanine + ATP = L-phenylalanyl-tRNA(Phe) + AMP + diphosphate + H(+). The protein is Phenylalanine--tRNA ligase alpha subunit of Pyrococcus abyssi (strain GE5 / Orsay).